Reading from the N-terminus, the 930-residue chain is uncharacterized protein (930 aa).

Residues 1–20 (MPSFVLWTFHLCSQWFQGLT) form the signal peptide. N-linked (GlcNAc...) asparagine glycosylation is found at Asn-137, Asn-146, Asn-164, Asn-210, Asn-257, Asn-628, Asn-717, and Asn-799.

The protein localises to the secreted. This is an uncharacterized protein from Arthroderma benhamiae (strain ATCC MYA-4681 / CBS 112371) (Trichophyton mentagrophytes).